The primary structure comprises 554 residues: Glutamine--tRNA ligase (554 aa).

The 'HIGH' region motif lies at 34–44 (PEPNGYLHIGH). ATP contacts are provided by residues 35-37 (EPN) and 41-47 (HIGHAKS). Positions 67 and 212 each coordinate L-glutamine. Residues Thr-231, 261–262 (RL), and 269–271 (MSK) contribute to the ATP site. Residues 268 to 272 (VMSKR) carry the 'KMSKS' region motif. The segment at 317–324 (TKQDNTIE) is interaction with tRNA.

Belongs to the class-I aminoacyl-tRNA synthetase family. As to quaternary structure, monomer.

The protein resides in the cytoplasm. It catalyses the reaction tRNA(Gln) + L-glutamine + ATP = L-glutaminyl-tRNA(Gln) + AMP + diphosphate. The chain is Glutamine--tRNA ligase from Escherichia coli O7:K1 (strain IAI39 / ExPEC).